The chain runs to 253 residues: Phosphoglycerate mutase 2 (253 aa).

A Phosphothreonine modification is found at Thr3. Residues 10–17 (RHGESTWN), 23–24 (CG), Arg62, 89–92 (ERHY), Lys100, and 116–117 (RR) contribute to the substrate site. Residue His11 is the Tele-phosphohistidine intermediate of the active site. Ser14 is modified (phosphoserine). Glu89 (proton donor/acceptor) is an active-site residue. At Ser118 the chain carries Phosphoserine. A phosphotyrosine mark is found at Tyr132 and Tyr133. At Ser135 the chain carries Phosphoserine. Thr152 is modified (phosphothreonine). Residue 187 to 188 (GN) participates in substrate binding.

The protein belongs to the phosphoglycerate mutase family. BPG-dependent PGAM subfamily. In terms of assembly, homodimer.

The enzyme catalyses (2R)-2-phosphoglycerate = (2R)-3-phosphoglycerate. It carries out the reaction (2R)-3-phospho-glyceroyl phosphate = (2R)-2,3-bisphosphoglycerate + H(+). In terms of biological role, interconversion of 3- and 2-phosphoglycerate with 2,3-bisphosphoglycerate as the primer of the reaction. Can also catalyze the reaction of EC 5.4.2.4 (synthase), but with a reduced activity. This chain is Phosphoglycerate mutase 2 (PGAM2), found in Bos taurus (Bovine).